A 316-amino-acid chain; its full sequence is Aspartate carbamoyltransferase catalytic subunit (316 aa).

2 residues coordinate carbamoyl phosphate: Arg-66 and Thr-67. Lys-94 provides a ligand contact to L-aspartate. Carbamoyl phosphate-binding residues include Arg-116, His-146, and Gln-149. The L-aspartate site is built by Arg-179 and Arg-234. Residues Gly-275 and Pro-276 each coordinate carbamoyl phosphate.

Belongs to the aspartate/ornithine carbamoyltransferase superfamily. ATCase family. As to quaternary structure, heterododecamer (2C3:3R2) of six catalytic PyrB chains organized as two trimers (C3), and six regulatory PyrI chains organized as three dimers (R2).

It carries out the reaction carbamoyl phosphate + L-aspartate = N-carbamoyl-L-aspartate + phosphate + H(+). It participates in pyrimidine metabolism; UMP biosynthesis via de novo pathway; (S)-dihydroorotate from bicarbonate: step 2/3. In terms of biological role, catalyzes the condensation of carbamoyl phosphate and aspartate to form carbamoyl aspartate and inorganic phosphate, the committed step in the de novo pyrimidine nucleotide biosynthesis pathway. This is Aspartate carbamoyltransferase catalytic subunit from Nitrosomonas europaea (strain ATCC 19718 / CIP 103999 / KCTC 2705 / NBRC 14298).